A 501-amino-acid chain; its full sequence is Cytochrome P450 monooxygeanse terP (501 aa).

A helical transmembrane segment spans residues 2–22 (PSLLLSLLLLQVPIICAWLLV). Cysteine 441 provides a ligand contact to heme.

Belongs to the cytochrome P450 family. Heme serves as cofactor.

The protein resides in the membrane. It participates in secondary metabolite biosynthesis. Functionally, cytochrome P450 monooxygeanse; part of the gene cluster that mediates the biosynthesis of terpendoles, indole-diterpene (IDT) mycotoxins including terpendole I, terpendole K, terpendole C, as well as the kinesin Eg5 inhibitor terpendole E. TerP has dual activity and is able to convert terpendole E to 13-desoxyterpendole I and paspaline to 13-desoxypaxilline. Terpendoles biosynthesis begins with the synthesis of geranylgeranyl diphosphate (GGPP) by a yet unidentified GGPP synthase. Condensation of indole-3-glycerol phosphate with GGPP by the prenyltransferase terC then forms 3-geranylgeranylindole (3-GGI), followed by epoxidation and cyclization of this intermediate (by the FAD-dependent monooxygeanse terM and the terpene cyclase terB) to form paspaline. The cytochrome monooxygenase terQ then hydroxylates paspalline at C-11 to yield terpendole E. The cytochrome monooxygenase terP converts terpendole E to 13-desoxyterpendole I, and terQ converts 13-desoxyterpendole I into terpendole I. TerF and terK are required for conversion of terpendole I to terpendole C which is further converted to terpendole K. This chain is Cytochrome P450 monooxygeanse terP, found in Tolypocladium album (Soil fungus).